Here is a 187-residue protein sequence, read N- to C-terminus: Meiotically up-regulated protein C1442.13c (187 aa).

2 disordered regions span residues 15 to 46 (QWEN…LSNE) and 119 to 145 (IQEG…PAIN). Residues 26–41 (PPRKPKIVQPKKKPSK) show a composition bias toward basic residues. The 43-residue stretch at 145–187 (NNGKGKQLLEMMGWSRGKGLGSENQGMVDPVVAVVKNNKQGLH) folds into the G-patch domain.

The protein localises to the nucleus. It localises to the cytoplasm. It is found in the cytoskeleton. The protein resides in the microtubule organizing center. Its subcellular location is the spindle pole body. Has a role in meiosis and sporulation. Required for meiotic chromosome segregation. In Schizosaccharomyces pombe (strain 972 / ATCC 24843) (Fission yeast), this protein is Meiotically up-regulated protein C1442.13c.